A 523-amino-acid chain; its full sequence is Flavin-dependent halogenase armH5 (523 aa).

The FAD site is built by glycine 17, alanine 20, and glutamate 50. 2 residues coordinate chloride: serine 328 and glycine 329. FAD is bound at residue valine 330.

This sequence belongs to the flavin-dependent halogenase family.

The catalysed reaction is melleolide F + FADH2 + chloride + O2 = 6'-chloromelleolide F + FAD + 2 H2O + H(+). Flavin-dependent halogenase involved in the biosynthesis of melleolides, a range of antifungal and phytotoxic polyketide derivatives composed of an orsellinic acid (OA) moiety esterified to various sesquiterpene alcohols. The halogenase catalyzes the transfer of a single chlorine atom to the melleolide backbone, resulting in a 6'-chloromelleolide product. The enzyme acts on free substrate and does not depend on carrier-protein-dependent acceptor molecules. In Armillaria mellea (Honey mushroom), this protein is Flavin-dependent halogenase armH5.